Consider the following 205-residue polypeptide: Guanylate kinase (205 aa).

The Guanylate kinase-like domain occupies 7 to 185 (GNIFIISAAS…AEEDLRHIVN (179 aa)). 14 to 21 (AASGTGKT) contacts ATP.

It belongs to the guanylate kinase family.

The protein resides in the cytoplasm. The enzyme catalyses GMP + ATP = GDP + ADP. Its function is as follows. Essential for recycling GMP and indirectly, cGMP. This chain is Guanylate kinase (gmk), found in Neisseria meningitidis serogroup B (strain ATCC BAA-335 / MC58).